The following is a 305-amino-acid chain: PI-PLC X domain-containing protein 1 (305 aa).

Positions 1 to 24 (MSMSTLRHFLWLGALLLATIQVSA) are cleaved as a signal peptide. The PI-PLC X-box domain maps to 25 to 189 (LPTAQDLICN…RLIVFVDSKA (165 aa)). Active-site residues include histidine 53 and histidine 97. Asparagine 237 is a glycosylation site (N-linked (GlcNAc...) asparagine).

Its subcellular location is the secreted. The sequence is that of PI-PLC X domain-containing protein 1 from Arthroderma benhamiae (strain ATCC MYA-4681 / CBS 112371) (Trichophyton mentagrophytes).